The primary structure comprises 184 residues: Cell wall protein phiA (184 aa).

A signal peptide spans 1–21; sequence MQLKNLIFAAATAAALPATDA. N-linked (GlcNAc...) asparagine glycosylation occurs at asparagine 58.

The protein belongs to the phiA family.

Its subcellular location is the secreted. The protein localises to the cell wall. Cell wall protein involved in development of asexual structures such as phialide and conidium development, and thus required for spore formation. Plays a role as a general stress protectant produced by the fungus in competition with antagonistic bacteria. The polypeptide is Cell wall protein phiA (Aspergillus niger (strain ATCC MYA-4892 / CBS 513.88 / FGSC A1513)).